The following is a 420-amino-acid chain: Tyrosine--tRNA ligase (420 aa).

Tyr-33 lines the L-tyrosine pocket. The 'HIGH' region motif lies at 38–47 (PTGDSLHAGH). L-tyrosine-binding residues include Tyr-167 and Gln-171. Residues 227–231 (KFGKS) carry the 'KMSKS' region motif. Lys-230 is a binding site for ATP. In terms of domain architecture, S4 RNA-binding spans 352 to 418 (PTIIDLLIGA…GKKNFAGVKY (67 aa)).

It belongs to the class-I aminoacyl-tRNA synthetase family. TyrS type 1 subfamily. Homodimer.

It localises to the cytoplasm. The catalysed reaction is tRNA(Tyr) + L-tyrosine + ATP = L-tyrosyl-tRNA(Tyr) + AMP + diphosphate + H(+). Functionally, catalyzes the attachment of tyrosine to tRNA(Tyr) in a two-step reaction: tyrosine is first activated by ATP to form Tyr-AMP and then transferred to the acceptor end of tRNA(Tyr). The sequence is that of Tyrosine--tRNA ligase from Corynebacterium diphtheriae (strain ATCC 700971 / NCTC 13129 / Biotype gravis).